We begin with the raw amino-acid sequence, 245 residues long: Purine nucleoside phosphorylase (245 aa).

A purine D-ribonucleoside is bound at residue His7. Phosphate-binding positions include 23–27 (GDPGR), Arg45, and 88–91 (RAGS). 183–184 (ME) lines the a purine D-ribonucleoside pocket. The Proton donor role is filled by Asp206.

The protein belongs to the PNP/MTAP phosphorylase family. In terms of assembly, homohexamer; trimer of homodimers.

It carries out the reaction inosine + phosphate = alpha-D-ribose 1-phosphate + hypoxanthine. The catalysed reaction is guanosine + phosphate = alpha-D-ribose 1-phosphate + guanine. It catalyses the reaction 2'-deoxyguanosine + phosphate = 2-deoxy-alpha-D-ribose 1-phosphate + guanine. The enzyme catalyses 2'-deoxyinosine + phosphate = 2-deoxy-alpha-D-ribose 1-phosphate + hypoxanthine. It carries out the reaction S-methyl-5'-thioinosine + phosphate = 5-(methylsulfanyl)-alpha-D-ribose 1-phosphate + hypoxanthine. It participates in purine metabolism; purine nucleoside salvage. Its activity is regulated as follows. Inhibited by Immucillin-H and 5'-methylthio-Immucillin-H. Inhibited by 5'-deaza-1'-aza-2c-deoxy-1'-(9-methylene)-Immucilin-G (DADMe-ImmG). As part of the purine salvage pathway, catalyzes the phosphorolytic breakdown of the N-glycosidic bond in the beta-(deoxy)ribonucleoside molecules, with the formation of the corresponding free purine bases and pentose-1-phosphate. Preferentially acts on inosine and guanosine, and to a lesser extent on 2'-deoxyguanosine and guanosine. Also catalyzes the phosphorylation of S-methyl-5'-thioinosine (MTI) to hypoxanthine; MTI is produced by adenosine deaminase (ADA)-mediated breakdown of S-methyl-5'-thioadenosine (MTA), a major by-product of polyamine biosynthesis. Generates hypoxanthine from both the purine salvage pathway and from polyamine metabolism which is required for nucleic acids synthesis. Has no activity towards adenosine. The polypeptide is Purine nucleoside phosphorylase (Plasmodium falciparum (isolate 3D7)).